The sequence spans 388 residues: MKRNFPKLIALSLIFSLSVTPIANAESNSNIKAKDKKHVQVNVEDKSVPTDVRNLAQKDYLSYVTSLDKIYNKEKASYTLGEPFKIYKFNKKSDGNYYFPVLNTEGNIDYIVTISPKITKYSSSSSKYTINVSPFLSKVLNQYKDQQITILTNSKGYYVVTQNHKAKLVLKTPRLEDKKLKKTESIPTGNNVTQLKQKASVTMPTSQFKSNNYTYNEQYINKLENFKIRETQGNNGWCAGYTMSALLNATYNTNKYHAEAVMRFLHPNLQGQRFQFTGLTPREMIYFGQTQGRSPQLLNRMTTYNEVDNLTKNNKGIAVLGSRVESRNGMHAGHAMAVVGNAKLDNGQEVIIIWNPWDNGFMTQDAKNNVIPVSNGDHYRWYSSIYGY.

The N-terminal stretch at 1-25 (MKRNFPKLIALSLIFSLSVTPIANA) is a signal peptide. A propeptide spanning residues 26-214 (ESNSNIKAKD…TSQFKSNNYT (189 aa)) is cleaved from the precursor. Active-site residues include C238, H334, and N355.

This sequence belongs to the peptidase C47 family. In terms of assembly, in the cytoplasm, prematurely activated/folded ScpA forms a stable non-covalent complex with ScpB. In terms of processing, cleavage leads to the activation of ScpA probably by an auto-catalytic manner.

It localises to the secreted. The enzyme catalyses Broad endopeptidase action on proteins including elastin, but rather limited hydrolysis of small-molecule substrates. Assays are conveniently made with hemoglobin, casein or Z-Phe-Arg-NHMec as substrate.. Prematurely activated/folded staphopain A is inhibited by staphostatin A (ScpB), which is probably required to protect staphylococcal cytoplasmic proteins from degradation by ScpA. Its function is as follows. Cysteine protease that plays an important role in the inhibition of host innate immune response. Cleaves host elastins found in connective tissues, pulmonary surfactant protein A in the lungs, and the chemokine receptor CXCR2 on leukocytes. Proteolytic cleavage of surfactant protein A impairs bacterial phagocytosis by neutrophils while CXCR2 degradation blocks neutrophil activation and chemotaxis. Additionally, promotes vascular leakage by activating the plasma kallikerin/kinin system, resulting in hypotension. The chain is Staphopain A (sspP) from Staphylococcus aureus (strain Mu50 / ATCC 700699).